We begin with the raw amino-acid sequence, 369 residues long: MIALLIGAGLALLCALVGTPLFIRLLVRRGYGQFIRDDGPTSHHTKRGTPTMGGTVVVAAVLLSYGLTHLIMFLMNPDSPGPSASALILLFLMVGMGLVGFLDDFIKISRQRSLGLNAKAKLILQAAVGVIFAVLALNFPDESGLAPASTKISLVRDLPWLDLAFGGTVLGAILFVVWSNLIVTAATNGVNLTDGLDGLAAGASVMVFGAYTLMGIWQSNQACGSPREAGSGCYSVRDPLDLALLAAIMSAALVGFLWWNTSPAKIFMGDTGSLAIGGAIAGFAILSRTELLLGIIGGLFVLITLSVIIQVGYFKATGGKRVFKMAPLQHHFELKGWAEVTVVVRFWILGGLFVAVGLGIFYAEWVVLL.

The next 10 helical transmembrane spans lie at Ile-2–Phe-22, Thr-55–Met-75, Ala-86–Ile-106, Ala-120–Pro-140, Leu-163–Val-183, Leu-196–Ile-216, Pro-239–Trp-259, Ile-266–Leu-286, Leu-291–Val-311, and Ile-348–Leu-368.

It belongs to the glycosyltransferase 4 family. MraY subfamily. It depends on Mg(2+) as a cofactor.

The protein resides in the cell membrane. The enzyme catalyses UDP-N-acetyl-alpha-D-muramoyl-L-alanyl-gamma-D-glutamyl-meso-2,6-diaminopimeloyl-D-alanyl-D-alanine + di-trans,octa-cis-undecaprenyl phosphate = di-trans,octa-cis-undecaprenyl diphospho-N-acetyl-alpha-D-muramoyl-L-alanyl-D-glutamyl-meso-2,6-diaminopimeloyl-D-alanyl-D-alanine + UMP. It functions in the pathway cell wall biogenesis; peptidoglycan biosynthesis. Its function is as follows. Catalyzes the initial step of the lipid cycle reactions in the biosynthesis of the cell wall peptidoglycan: transfers peptidoglycan precursor phospho-MurNAc-pentapeptide from UDP-MurNAc-pentapeptide onto the lipid carrier undecaprenyl phosphate, yielding undecaprenyl-pyrophosphoryl-MurNAc-pentapeptide, known as lipid I. In Pseudarthrobacter chlorophenolicus (strain ATCC 700700 / DSM 12829 / CIP 107037 / JCM 12360 / KCTC 9906 / NCIMB 13794 / A6) (Arthrobacter chlorophenolicus), this protein is Phospho-N-acetylmuramoyl-pentapeptide-transferase.